We begin with the raw amino-acid sequence, 300 residues long: Porphobilinogen deaminase (300 aa).

At Cys-239 the chain carries S-(dipyrrolylmethanemethyl)cysteine.

It belongs to the HMBS family. Monomer. Dipyrromethane is required as a cofactor.

The enzyme catalyses 4 porphobilinogen + H2O = hydroxymethylbilane + 4 NH4(+). It participates in porphyrin-containing compound metabolism; protoporphyrin-IX biosynthesis; coproporphyrinogen-III from 5-aminolevulinate: step 2/4. Its function is as follows. Tetrapolymerization of the monopyrrole PBG into the hydroxymethylbilane pre-uroporphyrinogen in several discrete steps. The sequence is that of Porphobilinogen deaminase from Francisella tularensis subsp. tularensis (strain FSC 198).